The primary structure comprises 522 residues: ATP synthase subunit alpha (522 aa).

176–183 (GDRQTGKT) provides a ligand contact to ATP.

Belongs to the ATPase alpha/beta chains family. F-type ATPases have 2 components, CF(1) - the catalytic core - and CF(0) - the membrane proton channel. CF(1) has five subunits: alpha(3), beta(3), gamma(1), delta(1), epsilon(1). CF(0) has four main subunits: a, b, b' and c.

It localises to the cell membrane. The catalysed reaction is ATP + H2O + 4 H(+)(in) = ADP + phosphate + 5 H(+)(out). Functionally, produces ATP from ADP in the presence of a proton gradient across the membrane. The alpha chain is a regulatory subunit. This Chloroflexus aggregans (strain MD-66 / DSM 9485) protein is ATP synthase subunit alpha.